The primary structure comprises 229 residues: NAD(P)H-hydrate epimerase (229 aa).

The YjeF N-terminal domain occupies 10-217 (AINVDLELFN…ALQRKYELNL (208 aa)). Residue 60 to 64 (NNGGD) coordinates (6S)-NADPHX. 2 residues coordinate K(+): asparagine 61 and aspartate 125. Residues 129–135 (GFSFKPP) and aspartate 158 each bind (6S)-NADPHX. Serine 161 provides a ligand contact to K(+).

This sequence belongs to the NnrE/AIBP family. K(+) is required as a cofactor.

It carries out the reaction (6R)-NADHX = (6S)-NADHX. The enzyme catalyses (6R)-NADPHX = (6S)-NADPHX. Catalyzes the epimerization of the S- and R-forms of NAD(P)HX, a damaged form of NAD(P)H that is a result of enzymatic or heat-dependent hydration. This is a prerequisite for the S-specific NAD(P)H-hydrate dehydratase to allow the repair of both epimers of NAD(P)HX. This Drosophila virilis (Fruit fly) protein is NAD(P)H-hydrate epimerase.